A 658-amino-acid polypeptide reads, in one-letter code: UvrABC system protein B (658 aa).

The Helicase ATP-binding domain maps to 25–416 (KSLKNNNHYQ…QKNVAEQIIR (392 aa)). 38–45 (GVTGSGKT) is an ATP binding site. The Beta-hairpin signature appears at 91–114 (HFDYYQPESYIPRRDLFIEKDSSI). The Helicase C-terminal domain maps to 433 to 607 (QVQDLFDEIK…ELKLRDDEIK (175 aa)). A UVR domain is found at 623–658 (EKIIKELDKKMRERAKNLDFEEAMRLRDEIAQLRTL).

This sequence belongs to the UvrB family. Forms a heterotetramer with UvrA during the search for lesions. Interacts with UvrC in an incision complex.

Its subcellular location is the cytoplasm. The UvrABC repair system catalyzes the recognition and processing of DNA lesions. A damage recognition complex composed of 2 UvrA and 2 UvrB subunits scans DNA for abnormalities. Upon binding of the UvrA(2)B(2) complex to a putative damaged site, the DNA wraps around one UvrB monomer. DNA wrap is dependent on ATP binding by UvrB and probably causes local melting of the DNA helix, facilitating insertion of UvrB beta-hairpin between the DNA strands. Then UvrB probes one DNA strand for the presence of a lesion. If a lesion is found the UvrA subunits dissociate and the UvrB-DNA preincision complex is formed. This complex is subsequently bound by UvrC and the second UvrB is released. If no lesion is found, the DNA wraps around the other UvrB subunit that will check the other stand for damage. In Helicobacter pylori (strain J99 / ATCC 700824) (Campylobacter pylori J99), this protein is UvrABC system protein B.